An 878-amino-acid chain; its full sequence is Probable outer membrane protein PmpI (878 aa).

The N-terminal stretch at 1–24 (MRPDHMNFCCLCAAILSSTAVLFG) is a signal peptide. Positions 360–371 (SSKESPLPSSLQ) are enriched in low complexity. Positions 360 to 381 (SSKESPLPSSLQASVTSPTPAT) are disordered. Residues 372–381 (ASVTSPTPAT) are compositionally biased toward polar residues. Residues 602-878 (GGAYLFGTWG…SLDLGTTYRF (277 aa)) form the Autotransporter domain.

Belongs to the PMP outer membrane protein family.

It is found in the secreted. Its subcellular location is the cell wall. The protein localises to the cell outer membrane. In Chlamydia trachomatis serovar D (strain ATCC VR-885 / DSM 19411 / UW-3/Cx), this protein is Probable outer membrane protein PmpI (pmpI).